The primary structure comprises 113 residues: uncharacterized protein (113 aa).

The protein localises to the mitochondrion. This is an uncharacterized protein from Arabidopsis thaliana (Mouse-ear cress).